An 89-amino-acid chain; its full sequence is Large ribosomal subunit protein bL27 (89 aa).

Belongs to the bacterial ribosomal protein bL27 family.

This Bacteroides thetaiotaomicron (strain ATCC 29148 / DSM 2079 / JCM 5827 / CCUG 10774 / NCTC 10582 / VPI-5482 / E50) protein is Large ribosomal subunit protein bL27.